Reading from the N-terminus, the 439-residue chain is S-layer protein (439 aa).

The signal sequence occupies residues M1–A30.

Post-translationally, glycosylated.

It is found in the secreted. The protein localises to the cell wall. The protein resides in the S-layer. Functionally, the S-layer is a paracrystalline mono-layered assembly of proteins which coat the surface of bacteria. In Lactobacillus helveticus (Lactobacillus suntoryeus), this protein is S-layer protein (slpH).